The primary structure comprises 452 residues: Protoheme IX farnesyltransferase, mitochondrial (452 aa).

A mitochondrion-targeting transit peptide spans 1–27; it reads MSLVIQPLLMRALNPNLSSILISGRGF. The next 7 helical transmembrane spans lie at 152–172, 235–255, 267–287, 291–311, 341–361, 364–386, and 417–437; these read VLVMLSAICSYALSPYPATVL, ILWLGVNPTVAFLGFSNIALY, IINTWVGALVGAIPPLMGWAA, LSHPGAWCLAGLLYAWQFPHF, VALRYSLLMFPLCFGLSYFNV, WYYQLDSAFVNAWMSLWAFKFYF, and TFWVSVLHLPAVLILAILHKK.

It belongs to the UbiA prenyltransferase family.

The protein resides in the mitochondrion membrane. Its function is as follows. Converts protoheme IX and farnesyl diphosphate to heme O. This chain is Protoheme IX farnesyltransferase, mitochondrial (COX10), found in Kluyveromyces lactis (strain ATCC 8585 / CBS 2359 / DSM 70799 / NBRC 1267 / NRRL Y-1140 / WM37) (Yeast).